The sequence spans 267 residues: DNA repair protein RecO (267 aa).

It belongs to the RecO family.

Its function is as follows. Involved in DNA repair and RecF pathway recombination. The polypeptide is DNA repair protein RecO (Mesoplasma florum (strain ATCC 33453 / NBRC 100688 / NCTC 11704 / L1) (Acholeplasma florum)).